Here is a 514-residue protein sequence, read N- to C-terminus: Maturase K (514 aa).

This sequence belongs to the intron maturase 2 family. MatK subfamily.

The protein localises to the plastid. It localises to the chloroplast. In terms of biological role, usually encoded in the trnK tRNA gene intron. Probably assists in splicing its own and other chloroplast group II introns. In Tsuga canadensis (Eastern hemlock), this protein is Maturase K.